A 264-amino-acid chain; its full sequence is uncharacterized protein (264 aa).

A divalent metal cation-binding residues include histidine 5, histidine 7, glutamate 93, histidine 134, histidine 158, and aspartate 208.

Belongs to the metallo-dependent hydrolases superfamily. TatD-type hydrolase family. A divalent metal cation is required as a cofactor.

This is an uncharacterized protein from Mycobacterium tuberculosis (strain ATCC 25618 / H37Rv).